A 704-amino-acid polypeptide reads, in one-letter code: Arylphorin (704 aa).

An N-terminal signal peptide occupies residues 1 to 16 (MKIVLVLAGLIALVQS). N-linked (GlcNAc...) asparagine glycosylation is found at N73, N212, and N360.

It belongs to the hemocyanin family. Homohexamer of two stacked trimers; disulfide-linked. Post-translationally, glycosylation at Asn-360 is required for proper folding.

It localises to the secreted. Its subcellular location is the extracellular space. Its function is as follows. Arylphorin is a larval storage protein (LSP) which may serve as a storage protein used primarily as a source of aromatic amino acids for protein synthesis during metamorphosis. It is a constituent of the sclerotizing system of the cuticle, and serves as a carrier for ecdysteroid hormone. The sequence is that of Arylphorin from Antheraea pernyi (Chinese oak silk moth).